Reading from the N-terminus, the 702-residue chain is Translation factor GUF1 homolog, chloroplastic (702 aa).

A compositionally biased stretch (low complexity) spans 1 to 30; that stretch reads MASAAPASRGAARASTAARDAPFAAAARGP. The segment at 1–41 is disordered; it reads MASAAPASRGAARASTAARDAPFAAAARGPGRFRRDGNGRN. Positions 87-283 constitute a tr-type G domain; sequence SQIRNFSIIA…NIVKMIPPPP (197 aa). GTP contacts are provided by residues 96–103, 162–166, and 216–219; these read AHIDHGKS, DTPGH, and NKID.

This sequence belongs to the TRAFAC class translation factor GTPase superfamily. Classic translation factor GTPase family. LepA subfamily.

It localises to the plastid. The protein resides in the chloroplast. It catalyses the reaction GTP + H2O = GDP + phosphate + H(+). Its function is as follows. Promotes chloroplast protein synthesis. May act as a fidelity factor of the translation reaction, by catalyzing a one-codon backward translocation of tRNAs on improperly translocated ribosomes. In Micromonas pusilla (strain CCMP1545) (Picoplanktonic green alga), this protein is Translation factor GUF1 homolog, chloroplastic.